The chain runs to 766 residues: Serine/threonine-protein kinase PLK4 (766 aa).

In terms of domain architecture, Protein kinase spans 14–267; sequence YEVQHLLGKG…LEAVLCHPFM (254 aa). ATP-binding positions include 20–28 and Lys-43; that span reads LGKGGFAIV. The active-site Proton acceptor is Asp-138. The 118-residue stretch at 379–496 folds into the Cryptic POLO box 1 (CPB1) domain; the sequence is EDRISVPPLN…ARFVGLVKSK (118 aa). The 104-residue stretch at 497-600 folds into the Cryptic POLO box 2 (CPB2) domain; that stretch reads TPKVTYFSTL…GRRPVTDVQP (104 aa). The POLO box domain maps to 658-737; the sequence is PIKRINVPDV…IPNIQIKLKT (80 aa).

Belongs to the protein kinase superfamily. Ser/Thr protein kinase family. CDC5/Polo subfamily. In terms of assembly, homodimer. Ubiquitinated by the SCF(Slimb) ubiquitin ligase complex; leading to its degradation by the proteasome during interphase and regulating centriole number and ensuring the block to centriole reduplication.

It is found in the cytoplasm. It localises to the cytoskeleton. The protein resides in the microtubule organizing center. The protein localises to the centrosome. Its subcellular location is the centriole. The enzyme catalyses L-seryl-[protein] + ATP = O-phospho-L-seryl-[protein] + ADP + H(+). It catalyses the reaction L-threonyl-[protein] + ATP = O-phospho-L-threonyl-[protein] + ADP + H(+). Its function is as follows. Serine/threonine-protein kinase that plays a central role in centriole duplication. Able to trigger procentriole formation on the surface of the mother centriole cylinder, using mother centriole as a platform, leading to the recruitment of centriole biogenesis proteins such as sas-6. When overexpressed, it is able to induce centrosome amplification through the simultaneous generation of multiple procentrioles adjoining each parental centriole during S phase. Centrosome amplification following overexpression can initiate tumorigenesis, highlighting the importance of centrosome regulation in cancers. The chain is Serine/threonine-protein kinase PLK4 (SAK) from Drosophila yakuba (Fruit fly).